The following is a 297-amino-acid chain: 4-hydroxybenzoate octaprenyltransferase (297 aa).

Helical transmembrane passes span 29–49 (IGTY…AEGV), 55–75 (LFIF…VNDF), 102–122 (AWTL…LTNA), 124–141 (TVYL…YPFM), 146–166 (FYPQ…AFTA), 169–189 (GSLP…TVAY), 219–239 (VIIV…GVRF), 241–261 (LGQW…WEFW), and 270–290 (VCFK…AGIV).

It belongs to the UbiA prenyltransferase family. The cofactor is Mg(2+).

The protein resides in the cell inner membrane. It catalyses the reaction all-trans-octaprenyl diphosphate + 4-hydroxybenzoate = 4-hydroxy-3-(all-trans-octaprenyl)benzoate + diphosphate. It participates in cofactor biosynthesis; ubiquinone biosynthesis. In terms of biological role, catalyzes the prenylation of para-hydroxybenzoate (PHB) with an all-trans polyprenyl group. Mediates the second step in the final reaction sequence of ubiquinone-8 (UQ-8) biosynthesis, which is the condensation of the polyisoprenoid side chain with PHB, generating the first membrane-bound Q intermediate 3-octaprenyl-4-hydroxybenzoate. This chain is 4-hydroxybenzoate octaprenyltransferase, found in Stutzerimonas stutzeri (strain A1501) (Pseudomonas stutzeri).